A 101-amino-acid chain; its full sequence is Small ribosomal subunit protein uS14m (101 aa).

Belongs to the universal ribosomal protein uS14 family. As to quaternary structure, component of the mitochondrial ribosome small subunit (28S) which comprises a 12S rRNA and about 30 distinct proteins. Interacts with LIAT1.

Its subcellular location is the mitochondrion. The sequence is that of Small ribosomal subunit protein uS14m (mrps14) from Dictyostelium discoideum (Social amoeba).